Here is a 99-residue protein sequence, read N- to C-terminus: Large ribosomal subunit protein bL27 (99 aa).

Residues 1–12 (MMINNLEALKLF) constitute a propeptide that is removed on maturation. A disordered region spans residues 15–36 (HKGGGSTANGRNSAGRRLGAKR).

Belongs to the bacterial ribosomal protein bL27 family. Post-translationally, the N-terminus is cleaved by ribosomal processing cysteine protease Prp.

This Lactobacillus johnsonii (strain CNCM I-12250 / La1 / NCC 533) protein is Large ribosomal subunit protein bL27.